A 468-amino-acid polypeptide reads, in one-letter code: ATP synthase subunit beta 2 (468 aa).

Residue 155-162 (GGAGVGKT) coordinates ATP.

The protein belongs to the ATPase alpha/beta chains family. F-type ATPases have 2 components, CF(1) - the catalytic core - and CF(0) - the membrane proton channel. CF(1) has five subunits: alpha(3), beta(3), gamma(1), delta(1), epsilon(1). CF(0) has four main subunits: a(1), b(1), b'(1) and c(9-12).

It localises to the cell inner membrane. It carries out the reaction ATP + H2O + 4 H(+)(in) = ADP + phosphate + 5 H(+)(out). In terms of biological role, produces ATP from ADP in the presence of a proton gradient across the membrane. The catalytic sites are hosted primarily by the beta subunits. This chain is ATP synthase subunit beta 2, found in Chlorobium luteolum (strain DSM 273 / BCRC 81028 / 2530) (Pelodictyon luteolum).